The sequence spans 235 residues: Ubiquinone biosynthesis O-methyltransferase (235 aa).

Residues Arg36, Gly56, Asp77, and Met122 each coordinate S-adenosyl-L-methionine.

This sequence belongs to the methyltransferase superfamily. UbiG/COQ3 family.

It carries out the reaction a 3-demethylubiquinol + S-adenosyl-L-methionine = a ubiquinol + S-adenosyl-L-homocysteine + H(+). It catalyses the reaction a 3-(all-trans-polyprenyl)benzene-1,2-diol + S-adenosyl-L-methionine = a 2-methoxy-6-(all-trans-polyprenyl)phenol + S-adenosyl-L-homocysteine + H(+). It participates in cofactor biosynthesis; ubiquinone biosynthesis. O-methyltransferase that catalyzes the 2 O-methylation steps in the ubiquinone biosynthetic pathway. The chain is Ubiquinone biosynthesis O-methyltransferase from Leptothrix cholodnii (strain ATCC 51168 / LMG 8142 / SP-6) (Leptothrix discophora (strain SP-6)).